We begin with the raw amino-acid sequence, 146 residues long: Catabolic 3-dehydroquinase (146 aa).

Tyr-24 serves as the catalytic Proton acceptor. Substrate-binding residues include Asn-78, His-84, and Asp-91. The active-site Proton donor is the His-104. Residues Ile-105–Thr-106 and Arg-115 contribute to the substrate site.

It belongs to the type-II 3-dehydroquinase family. In terms of assembly, homododecamer. Adopts a ring-like structure, composed of an arrangement of two hexameric rings stacked on top of one another.

It catalyses the reaction 3-dehydroquinate = 3-dehydroshikimate + H2O. Its pathway is aromatic compound metabolism; 3,4-dihydroxybenzoate biosynthesis; 3,4-dihydroxybenzoate from 3-dehydroquinate: step 1/2. In terms of biological role, is involved in the catabolism of quinate. Allows the utilization of quinate as carbon source via the beta-ketoadipate pathway. The sequence is that of Catabolic 3-dehydroquinase from Candida dubliniensis (strain CD36 / ATCC MYA-646 / CBS 7987 / NCPF 3949 / NRRL Y-17841) (Yeast).